The sequence spans 840 residues: DNA mismatch repair protein MutS (840 aa).

601–608 (GPNMSGKS) contacts ATP.

This sequence belongs to the DNA mismatch repair MutS family.

Functionally, this protein is involved in the repair of mismatches in DNA. It is possible that it carries out the mismatch recognition step. This protein has a weak ATPase activity. This chain is DNA mismatch repair protein MutS, found in Lactococcus lactis subsp. cremoris (strain MG1363).